The primary structure comprises 71 residues: MAFLKKSLFLVLFLGLVSLSMGEREKREEEEEEEEENKEEEANEEGKGESEEKRGLVGTLLGHIGKAILGG.

Positions 1–22 (MAFLKKSLFLVLFLGLVSLSMG) are cleaved as a signal peptide. The disordered stretch occupies residues 21–56 (MGEREKREEEEEEEEENKEEEANEEGKGESEEKRGL). The propeptide occupies 23 to 54 (EREKREEEEEEEEENKEEEANEEGKGESEEKR). Residues 28-43 (EEEEEEEEENKEEEAN) are compositionally biased toward acidic residues. Residues 44-55 (EEGKGESEEKRG) show a composition bias toward basic and acidic residues. Position 70 is a glycine amide; in Frenatin 2.1S (glycine 70).

This sequence belongs to the frog skin active peptide (FSAP) family. Frenatin subfamily. Post-translationally, frenatin 2.3S is not amidated. In terms of tissue distribution, expressed by the skin glands.

The protein resides in the secreted. Functionally, antimicrobial peptide with potent activity against Gram-negative bacteria. Shows immunostimulatory actions both in vitro and in vivo. In vitro, is cytotoxic to non-small cell lung adenocarcinoma A549 cells. Also, stimulates production of pro-inflammatory cytokines by mouse peritoneal macrophages and down-regulates production of the anti-inflammatory cytokine IL-10 by lipopolysaccharide (LPS)-stimulated cells. In vivo, intraperitoneal injection in mice enhances the activation state and homing capacity of Th1 type lymphocytes and promotes the recruitment, activation and tumoricidal capacities of peritoneal NK cells. Has a very weak activity in stimulation of insulin release and a weak hemolytic activity. Antimicrobial peptide with potent activity against some Gram-positive and Gram-negative bacteria. Has a multifunctional mode of action. It displays depolarization and bacterial cell leakage, and can also internalize into bacterial cells and alter specific gene expression involved in bacterial resistance mechanisms. Does not agglutinate bacteria and lipid vesicles, even a high concentrations. Also displays moderate cellular protection against yellow fever virus (YFV)-infected Vero cells without causing significant cytotoxicity. Shows a weak hemolytic activity, and is not cytotoxic to monocytes. Frenatin 2.3S (version without Gly-71) shows no or very weak antibacterial activity, shows no or very weak cytotoxicity to lung adenocarcinoma A549 cells and shows very weak hemolysis. It only stimulates production of pro-inflammatory cytokines IL-23 (but not IL-1beta and TNF-alpha) by mouse peritoneal macrophages and has no effect on the production of the anti-inflammatory cytokine IL-10. Frenatin 2.3S (version without Gly-71) very weakly stimulates insulin release. The sequence is that of Frenatin 2.3S from Sphaenorhynchus lacteus (Orinoco lime treefrog).